Consider the following 139-residue polypeptide: Large ribosomal subunit protein uL16c (139 aa).

The segment at 1 to 20 is disordered; it reads MLSPKRTKYRKHHRGRMKGK.

Belongs to the universal ribosomal protein uL16 family. Part of the 50S ribosomal subunit.

Its subcellular location is the plastid. It is found in the chloroplast. This is Large ribosomal subunit protein uL16c from Pleurastrum terricola (Filamentous green alga).